The sequence spans 460 residues: tRNA-2-methylthio-N(6)-dimethylallyladenosine synthase (460 aa).

One can recognise an MTTase N-terminal domain in the interval 23–138 (RKVYVHTFGC…LPEMVARAER (116 aa)). [4Fe-4S] cluster contacts are provided by C32, C68, C101, C176, C180, and C183. One can recognise a Radical SAM core domain in the interval 162–394 (ARGRPTAFVT…QAAQRRIAAA (233 aa)). The TRAM domain occupies 397–460 (AAELGKVVEV…GGSSLSGTPA (64 aa)).

The protein belongs to the methylthiotransferase family. MiaB subfamily. As to quaternary structure, monomer. [4Fe-4S] cluster is required as a cofactor.

It is found in the cytoplasm. It catalyses the reaction N(6)-dimethylallyladenosine(37) in tRNA + (sulfur carrier)-SH + AH2 + 2 S-adenosyl-L-methionine = 2-methylsulfanyl-N(6)-dimethylallyladenosine(37) in tRNA + (sulfur carrier)-H + 5'-deoxyadenosine + L-methionine + A + S-adenosyl-L-homocysteine + 2 H(+). Catalyzes the methylthiolation of N6-(dimethylallyl)adenosine (i(6)A), leading to the formation of 2-methylthio-N6-(dimethylallyl)adenosine (ms(2)i(6)A) at position 37 in tRNAs that read codons beginning with uridine. This is tRNA-2-methylthio-N(6)-dimethylallyladenosine synthase from Anaeromyxobacter sp. (strain Fw109-5).